The primary structure comprises 290 residues: Small ribosomal subunit biogenesis GTPase RsgA (290 aa).

Residues 62 to 219 enclose the CP-type G domain; that stretch reads RTCLKRPAVA…VADTPGFSRL (158 aa). GTP contacts are provided by residues 111–114 and 161–169; these read NKAD and GPSGVGKSS. Residues cysteine 243, cysteine 248, histidine 250, and cysteine 256 each contribute to the Zn(2+) site.

It belongs to the TRAFAC class YlqF/YawG GTPase family. RsgA subfamily. In terms of assembly, monomer. Associates with 30S ribosomal subunit, binds 16S rRNA. The cofactor is Zn(2+).

It is found in the cytoplasm. Its function is as follows. One of several proteins that assist in the late maturation steps of the functional core of the 30S ribosomal subunit. Helps release RbfA from mature subunits. May play a role in the assembly of ribosomal proteins into the subunit. Circularly permuted GTPase that catalyzes slow GTP hydrolysis, GTPase activity is stimulated by the 30S ribosomal subunit. The protein is Small ribosomal subunit biogenesis GTPase RsgA of Moorella thermoacetica (strain ATCC 39073 / JCM 9320).